The chain runs to 263 residues: MLDLANMTPKEVRALIGKNEINKPTSGMCKGHIQANLVIVPKNLAYDFLLFAQRNPKSCPILDVTDVGSSEPRLMAKGADLKSDVPMYRIYEFGELVAEVSDLTDYWREDLVCFLLGCSFSFESAMLNASIPVRHIEDNHNVPMYITNIETEPAGQFHGKMVVSMRPIPYPLITRAVQATSRFPQVHGAPIHIGDPSVIGITDIHSPDFGDASLIKEGEVPVFWACGVTPQSIAMTSKPELMITHSPGYMFICDPKDEDLAVL.

The protein belongs to the D-glutamate cyclase family.

This chain is Putative hydro-lyase Psyc_1103, found in Psychrobacter arcticus (strain DSM 17307 / VKM B-2377 / 273-4).